A 1946-amino-acid chain; its full sequence is Sickle tail protein (1946 aa).

2 disordered regions span residues 1-83 and 113-176; these read MEES…GMQP and ERLR…VRSA. Over residues 18 to 36 the composition is skewed to polar residues; it reads DSRQMPQQGRSNLHVTSQE. Basic and acidic residues predominate over residues 38 to 47; sequence AACRRPRERL. Phosphoserine is present on S169. A Phosphotyrosine modification is found at Y244. 2 disordered regions span residues 305 to 324 and 339 to 374; these read HPPH…HSLP and AIPG…RDVK. Over residues 308–324 the composition is skewed to pro residues; the sequence is HVIPNSPPSTPVPHSLP. Residues 352 to 367 show a composition bias toward low complexity; that stretch reads SSLPVSRSISPSPSAI. O-linked (GlcNAc) serine glycosylation occurs at S357. A phosphoserine mark is found at S361 and S365. Y393 bears the Phosphotyrosine mark. The interval 455 to 512 is disordered; it reads SRKYPDSHLPTLGSKTPPASPHRVGDLRMIDLHPHLNTHGPPHTLQPDRASPSRQSFK. Phosphothreonine is present on T470. The residue at position 474 (S474) is a Phosphoserine. Over residues 477–488 the composition is skewed to basic and acidic residues; that stretch reads RVGDLRMIDLHP. Coiled coils occupy residues 557 to 581 and 644 to 685; these read RETR…QSAL and TSLL…ELEI. S809 carries the post-translational modification Phosphoserine. Disordered regions lie at residues 853–875 and 891–947; these read EETA…DVKS and SPVV…PVNG. Composition is skewed to polar residues over residues 891–909 and 927–947; these read SPVV…NPAQ and QEVT…PVNG. The stretch at 962–990 forms a coiled coil; the sequence is SAKNRAVSIEKAEKKWEEKRQNLEHYNGK. Residues 1008 to 1221 are disordered; sequence PNLEMPPASS…LRPSGPPKWE (214 aa). Phosphoserine is present on residues S1032, S1035, S1038, and S1049. A compositionally biased stretch (pro residues) spans 1049–1058; that stretch reads SPPPPPPPPR. The span at 1151 to 1162 shows a compositional bias: polar residues; sequence NPNSHAEQSRAN. Positions 1176–1194 are enriched in basic and acidic residues; that stretch reads PKEKKNLEFYHEDVRKSDV. A Phosphoserine modification is found at S1466. A coiled-coil region spans residues 1469-1495; that stretch reads FEECDEELERMLTEEKIEEEEEDENED. Disordered stretches follow at residues 1482-1567, 1622-1664, and 1691-1946; these read EEKI…VDDQ, AKRF…RKST, and VDTS…KETS. A compositionally biased stretch (acidic residues) spans 1484–1495; it reads KIEEEEEDENED. Residues 1498-1508 show a composition bias toward polar residues; that stretch reads VRTSSQMSCEQ. 2 stretches are compositionally biased toward basic and acidic residues: residues 1509-1518 and 1622-1644; these read VDSRSDRMGQ and AKRF…RRQE. Residues 1659-1688 adopt a coiled-coil conformation; that stretch reads EIRKSTYRTLDSLEQTIKQLENTISEMSPR. The span at 1739 to 1759 shows a compositional bias: polar residues; sequence KGSSTTPQTSRMPVPMTSKNR. S1741 carries the post-translational modification Phosphoserine. Residues 1765 to 1777 show a composition bias toward basic and acidic residues; sequence KASKQSKLQDPRQ. Residues 1806-1825 show a composition bias toward low complexity; that stretch reads ALSPSSGKSSSLPSASGDSS. The residue at position 1843 (S1843) is a Phosphoserine. The segment covering 1851 to 1866 has biased composition (polar residues); it reads HSASLIPSVSNGSLKF. Residues 1890 to 1899 are compositionally biased toward low complexity; it reads AAPTTSSSSS. Residues S1899, S1902, and S1905 each carry the phosphoserine modification. Positions 1920 to 1946 are enriched in polar residues; it reads HTPSLASYKAQNGSSSKATPSTAKETS.

Interacts with CPNE4 (via VWFA domain). In terms of tissue distribution, expressed predominantly in the notochord and mesonephros during embryogenesis as well as in other areas such as the epithalamus sulcus, lens vesicle, inner retinal layer, heart, hepatic primordial surface, infundibulum, surface ectoderm, hind gut and limb bud mesenchyme. In adults, expressed in a range of tissues including the nucleus pulposus, corpus callosum, kidney, cardiac muscle, Sertoli cells and hair follicles.

Its subcellular location is the cytoplasm. It localises to the cytoskeleton. It is found in the microtubule organizing center. The protein localises to the centrosome. In terms of biological role, required for normal development of intervertebral disks. This is Sickle tail protein from Mus musculus (Mouse).